We begin with the raw amino-acid sequence, 368 residues long: Probable dual-specificity RNA methyltransferase RlmN (368 aa).

The active-site Proton acceptor is the Glu100. The Radical SAM core domain occupies 106-344 (QHYGLSVCVT…CVVRQEHGTD (239 aa)). A disulfide bridge links Cys113 with Cys349. Residues Cys120, Cys124, and Cys127 each contribute to the [4Fe-4S] cluster site. S-adenosyl-L-methionine-binding positions include 172–173 (GE), Ser204, 227–229 (SLH), and Asn305. Cys349 (S-methylcysteine intermediate) is an active-site residue.

This sequence belongs to the radical SAM superfamily. RlmN family. The cofactor is [4Fe-4S] cluster.

The protein localises to the cytoplasm. The enzyme catalyses adenosine(2503) in 23S rRNA + 2 reduced [2Fe-2S]-[ferredoxin] + 2 S-adenosyl-L-methionine = 2-methyladenosine(2503) in 23S rRNA + 5'-deoxyadenosine + L-methionine + 2 oxidized [2Fe-2S]-[ferredoxin] + S-adenosyl-L-homocysteine. It carries out the reaction adenosine(37) in tRNA + 2 reduced [2Fe-2S]-[ferredoxin] + 2 S-adenosyl-L-methionine = 2-methyladenosine(37) in tRNA + 5'-deoxyadenosine + L-methionine + 2 oxidized [2Fe-2S]-[ferredoxin] + S-adenosyl-L-homocysteine. Specifically methylates position 2 of adenine 2503 in 23S rRNA and position 2 of adenine 37 in tRNAs. This is Probable dual-specificity RNA methyltransferase RlmN from Streptococcus agalactiae serotype V (strain ATCC BAA-611 / 2603 V/R).